The primary structure comprises 455 residues: Chromosomal replication initiator protein DnaA (455 aa).

A domain I, interacts with DnaA modulators region spans residues 1–75 (MDTNNNIEKE…EILSQNKVGM (75 aa)). The tract at residues 75–106 (MHLAHSVDVRIEVAPKIQINAQANINYKAIKT) is domain II. Positions 107–321 (SVKDSYTFEN…GAIIKISVNA (215 aa)) are domain III, AAA+ region. Residues Gly-151, Gly-153, Lys-154, and Thr-155 each contribute to the ATP site. Residues 322 to 455 (NLMNAPIDLN…DKKTAFNSSE (134 aa)) form a domain IV, binds dsDNA region.

Belongs to the DnaA family. As to quaternary structure, oligomerizes as a right-handed, spiral filament on DNA at oriC.

Its subcellular location is the cytoplasm. In terms of biological role, plays an essential role in the initiation and regulation of chromosomal replication. ATP-DnaA binds to the origin of replication (oriC) to initiate formation of the DNA replication initiation complex once per cell cycle. Binds the DnaA box (a 9 base pair repeat at the origin) and separates the double-stranded (ds)DNA. Forms a right-handed helical filament on oriC DNA; dsDNA binds to the exterior of the filament while single-stranded (ss)DNA is stabiized in the filament's interior. The ATP-DnaA-oriC complex binds and stabilizes one strand of the AT-rich DNA unwinding element (DUE), permitting loading of DNA polymerase. After initiation quickly degrades to an ADP-DnaA complex that is not apt for DNA replication. Binds acidic phospholipids. In Helicobacter pylori (strain P12), this protein is Chromosomal replication initiator protein DnaA.